Reading from the N-terminus, the 641-residue chain is Pumilio homolog 24 (641 aa).

The disordered stretch occupies residues 1-82 (MSSKGLKPQK…LTEARKKKRK (82 aa)). The 396-residue stretch at 9 to 404 (QKSTKRKDTD…RPLLQLLHPN (396 aa)) folds into the PUM-HD domain. Basic and acidic residues-rich tracts occupy residues 14–27 (RKDTDSSAKFDSLK) and 67–76 (RVQAKELTEA). 5 Pumilio repeats span residues 118–153 (KMKGKVPEIAVSHVSSRVLQTCVKFCSQAEKDVLFT), 154–189 (ELQPQFLNLASNKYAVHFIQKMLDGASKQQLAACIS), 190–225 (SLRGHVAPLLRHVFGSLVVEHAYHLGSAAQKQELLA), 303–340 (QLLTGSLLLRMVHTRDGSRLAMLSIKHGSAKERKKIIK), and 341–378 (AMKEHVKKMAFDQFGSMVLACIFSIVDDTKLVTKIIVR). Residues 427-468 (MDKSETSSKTKDTDGNEIGEETKDEQEDTVAEHSDHEENVTA) form a disordered region. The segment covering 428–440 (DKSETSSKTKDTD) has biased composition (basic and acidic residues). Over residues 441-455 (GNEIGEETKDEQEDT) the composition is skewed to acidic residues. The span at 456–468 (VAEHSDHEENVTA) shows a compositional bias: basic and acidic residues.

It localises to the nucleus. The protein resides in the nucleolus. Sequence-specific RNA-binding protein that regulates translation and mRNA stability by binding the 3'-UTR of target mRNAs. In Arabidopsis thaliana (Mouse-ear cress), this protein is Pumilio homolog 24 (APUM24).